The sequence spans 253 residues: Kallikrein-7 (253 aa).

Positions 1 to 22 (MARSLLLPLQILLLSLALETAG) are cleaved as a signal peptide. Positions 23–29 (EEAQGDK) are cleaved as a propeptide — activation peptide. One can recognise a Peptidase S1 domain in the interval 30–250 (IIDGAPCARG…FTKWINDTMK (221 aa)). Intrachain disulfides connect Cys36–Cys165, Cys55–Cys71, Cys137–Cys239, Cys144–Cys211, Cys176–Cys190, and Cys201–Cys226. Residues His70 and Asp112 each act as charge relay system in the active site. The active-site Charge relay system is Ser205. A glycan (N-linked (GlcNAc...) asparagine) is linked at Asn246.

The protein belongs to the peptidase S1 family. Kallikrein subfamily. Abundantly expressed in the skin and is expressed by keratinocytes in the epidermis. Also expressed in the brain, mammary gland, cerebellum, spinal cord and kidney. Lower levels in salivary glands, uterus, thymus, thyroid, placenta, trachea and testis. Up-regulated in ovarian carcinoma, especially late-stage serous carcinoma, compared with normal ovaries and benign adenomas (at protein level).

It localises to the secreted. The enzyme catalyses Cleavage of proteins with aromatic side chains in the P1 position.. With respect to regulation, inhibited by Zn2+ and Cu2+ at low micromolar concentrations. Inhibited by SERPINA12. In terms of biological role, may catalyze the degradation of intercellular cohesive structures in the cornified layer of the skin in the continuous shedding of cells from the skin surface. Specific for amino acid residues with aromatic side chains in the P1 position. Cleaves insulin A chain at '14-Tyr-|-Gln-15' and insulin B chain at '6-Leu-|-Cys-7', '16-Tyr-|-Leu-17', '25-Phe-|-Tyr-26' and '26-Tyr-|-Thr-27'. Could play a role in the activation of precursors to inflammatory cytokines. In Homo sapiens (Human), this protein is Kallikrein-7 (KLK7).